Here is an 86-residue protein sequence, read N- to C-terminus: Small ribosomal subunit protein bS16c (86 aa).

It belongs to the bacterial ribosomal protein bS16 family.

It localises to the plastid. Its subcellular location is the chloroplast. The sequence is that of Small ribosomal subunit protein bS16c from Liriodendron tulipifera (Tuliptree).